Consider the following 274-residue polypeptide: Proto-oncogene FRAT1 (274 aa).

4 disordered regions span residues 1–24, 55–107, 132–194, and 232–274; these read MPCR…DDSF, AHDR…PGAV, GASA…DDPH, and GPLS…VPGS. The span at 7 to 23 shows a compositional bias: acidic residues; sequence EEEEAGDEAEGEEDDDS. The segment at 191–214 is involved in GSK-3 binding; sequence DDPHRLLQQLVLSGNLIKEAVRRL. A phosphoserine mark is found at S243 and S246.

This sequence belongs to the GSK-3-binding protein family. As to quaternary structure, binds DVL1. Binds GSK-3 and prevent GSK-3-dependent phosphorylation. In terms of processing, phosphorylated. As to expression, highly expressed in testis. Lower level of expression in spleen, thymus and brain.

It localises to the cytoplasm. Functionally, positively regulates the Wnt signaling pathway by stabilizing beta-catenin through the association with GSK-3. May play a role in tumor progression and collaborate with PIM1 and MYC in lymphomagenesis. The polypeptide is Proto-oncogene FRAT1 (Frat1) (Mus musculus (Mouse)).